We begin with the raw amino-acid sequence, 234 residues long: Uridylate kinase (234 aa).

9 to 12 (KLSG) serves as a coordination point for ATP. Gly51 is a binding site for UMP. Residues Gly52 and Arg56 each coordinate ATP. Residues Asp71 and 132–139 (CGNPFFTT) each bind UMP. Thr159, Tyr165, and Asp168 together coordinate ATP.

This sequence belongs to the UMP kinase family. In terms of assembly, homohexamer.

Its subcellular location is the cytoplasm. It catalyses the reaction UMP + ATP = UDP + ADP. It functions in the pathway pyrimidine metabolism; CTP biosynthesis via de novo pathway; UDP from UMP (UMPK route): step 1/1. Its activity is regulated as follows. Inhibited by UTP. Functionally, catalyzes the reversible phosphorylation of UMP to UDP. The sequence is that of Uridylate kinase from Prochlorococcus marinus subsp. pastoris (strain CCMP1986 / NIES-2087 / MED4).